The following is a 132-amino-acid chain: Holo-[acyl-carrier-protein] synthase (132 aa).

2 residues coordinate Mg(2+): Asp8 and Glu62.

The protein belongs to the P-Pant transferase superfamily. AcpS family. It depends on Mg(2+) as a cofactor.

The protein resides in the cytoplasm. It carries out the reaction apo-[ACP] + CoA = holo-[ACP] + adenosine 3',5'-bisphosphate + H(+). Transfers the 4'-phosphopantetheine moiety from coenzyme A to a Ser of acyl-carrier-protein. This Methylibium petroleiphilum (strain ATCC BAA-1232 / LMG 22953 / PM1) protein is Holo-[acyl-carrier-protein] synthase.